The primary structure comprises 186 residues: MNVSKYVAIFSFVFIQLISVGKVFANADEWMTTFRENIVQTWQQPEHYDLYIPAITWHARFAYDKEKTDRYNERPWGGGFGLSRWDEKGNWHGLYAMAFKDSWNKWEPIAGYGWESTWRPLADENFHLGLGFTAGVTARDNWNYIPLPVLLPLASVGYGPVTFQMTYIPGTYNNGNVYFAWMRFQF.

A signal peptide spans 1 to 25; the sequence is MNVSKYVAIFSFVFIQLISVGKVFA. Active-site residues include histidine 58, aspartate 101, and serine 102.

The protein belongs to the lipid A palmitoyltransferase family. Homodimer.

It localises to the cell outer membrane. It carries out the reaction lipid A (E. coli) + a 1-hexadecanoyl-2-acyl-sn-glycero-3-phosphocholine = hepta-acyl lipid A (E. coli) + a 2-acyl-sn-glycero-3-phosphocholine. The catalysed reaction is lipid IIA + a 1-hexadecanoyl-2-acyl-sn-glycero-3-phosphocholine = lipid IIB + a 2-acyl-sn-glycero-3-phosphocholine. The enzyme catalyses lipid IVA (E. coli) + a 1-hexadecanoyl-2-acyl-sn-glycero-3-phosphocholine = lipid IVB (E. coli) + a 2-acyl-sn-glycero-3-phosphocholine. Its function is as follows. Transfers a palmitate residue from the sn-1 position of a phospholipid to the N-linked hydroxymyristate on the proximal unit of lipid A or its precursors. This Escherichia coli O157:H7 protein is Lipid A palmitoyltransferase PagP.